The sequence spans 391 residues: Ammonium transporter Amt1 (391 aa).

The next 10 membrane-spanning stretches (helical) occupy residues 12 to 32 (VFFF…FIAL), 51 to 71 (LDLA…SYGF), 88 to 108 (AWWM…TGGV), 112 to 132 (IKIL…YPIV), 152 to 172 (AGSG…AYVL), 192 to 212 (IPIA…FNIG), 223 to 243 (LASV…GGAL), 261 to 281 (VAVC…VGLL), 305 to 325 (IGPV…IPFL), and 338 to 358 (GQII…LIIY).

This sequence belongs to the ammonia transporter channel (TC 1.A.11.2) family. In terms of assembly, homotrimer. Interacts and forms a complex with GlnK1.

It is found in the cell membrane. Activity is regulated by the nitrogen regulatory protein GlnK1 via direct interaction. Formation of the GlnK1/Amt1 complex is decreased in the presence of Mg-ATP or 2-oxoglutarate. The presence of both effectors abolishes the formation of the complex. Its function is as follows. Involved in the uptake of ammonium/ammonia (NH(4)(+)/NH(3)). Transport is electrogenic. The sequence is that of Ammonium transporter Amt1 from Methanocaldococcus jannaschii (strain ATCC 43067 / DSM 2661 / JAL-1 / JCM 10045 / NBRC 100440) (Methanococcus jannaschii).